The primary structure comprises 490 residues: Probable cytosol aminopeptidase (490 aa).

Residues K258 and D263 each contribute to the Mn(2+) site. The active site involves K270. Mn(2+) is bound by residues D282, D341, and E343. R345 is a catalytic residue.

This sequence belongs to the peptidase M17 family. The cofactor is Mn(2+).

Its subcellular location is the cytoplasm. It catalyses the reaction Release of an N-terminal amino acid, Xaa-|-Yaa-, in which Xaa is preferably Leu, but may be other amino acids including Pro although not Arg or Lys, and Yaa may be Pro. Amino acid amides and methyl esters are also readily hydrolyzed, but rates on arylamides are exceedingly low.. The catalysed reaction is Release of an N-terminal amino acid, preferentially leucine, but not glutamic or aspartic acids.. Functionally, presumably involved in the processing and regular turnover of intracellular proteins. Catalyzes the removal of unsubstituted N-terminal amino acids from various peptides. The protein is Probable cytosol aminopeptidase of Microcystis aeruginosa (strain NIES-843 / IAM M-2473).